Consider the following 387-residue polypeptide: Probable multidrug resistance protein EmrK (387 aa).

Residues 1–16 (MEQINSNKKHSNRRKY) lie on the Cytoplasmic side of the membrane. A helical membrane pass occupies residues 17–37 (FSLLAVVLFIAFSGAYAYWSM). Residues 38-387 (ELEDMISTDD…SNIISHNGQL (350 aa)) are Periplasmic-facing.

It belongs to the membrane fusion protein (MFP) (TC 8.A.1) family. As to quaternary structure, part of the tripartite efflux system EmrYK-TolC, which is composed of an inner membrane transporter, EmrY, a membrane fusion protein, EmrK, and an outer membrane component, TolC. The complex forms a large protein conduit and can translocate molecules across both the inner and outer membranes.

The protein resides in the cell inner membrane. In terms of biological role, part of the tripartite efflux system EmrYK-TolC, which confers resistance to various drugs. In Escherichia coli (strain K12), this protein is Probable multidrug resistance protein EmrK (emrK).